The following is a 421-amino-acid chain: Putative NBPF family member NBPF7 (421 aa).

The stretch at 87–143 forms a coiled coil; that stretch reads IKSMLREELQFKEEKLAEQLKQAEELRQYKVLVHSQERELIQLREKLREGRDASHSL. 3 disordered regions span residues 179–251, 312–334, and 402–421; these read VHKL…KITS, EKEV…HDVS, and YNSK…FTED. Olduvai domains are found at residues 190-279 and 280-391; these read EDEN…NILL and ENQN…RMSQ. Positions 194 to 217 are enriched in basic and acidic residues; the sequence is DKTKELDKVQESPAPREEQKAEEK. A compositionally biased stretch (polar residues) spans 230-243; sequence TYSNSHGPSDSNPP. Basic and acidic residues predominate over residues 312–333; that stretch reads EKEVLQDSPEERVTTSCSDHDV. A compositionally biased stretch (polar residues) spans 403-421; sequence NSKPSSIPNTTLQGSFTED.

Belongs to the NBPF family.

The protein localises to the cytoplasm. This Homo sapiens (Human) protein is Putative NBPF family member NBPF7.